Here is a 358-residue protein sequence, read N- to C-terminus: DnaJ homolog subfamily C member 18 (358 aa).

A J domain is found at 82 to 146 (NYYEILGVSR…DKRLRYDEYG (65 aa)). The helical transmembrane segment at 228–248 (AFIQLLPVLVIVIISVITQLL) threads the bilayer.

The protein resides in the endoplasmic reticulum membrane. The chain is DnaJ homolog subfamily C member 18 (DNAJC18) from Macaca fascicularis (Crab-eating macaque).